The following is a 121-amino-acid chain: Small ribosomal subunit protein bS6 (121 aa).

The disordered stretch occupies residues 99-121 (PLPAPRVAPGTEAPAEPEAAAPA). Positions 110 to 121 (EAPAEPEAAAPA) are enriched in low complexity.

It belongs to the bacterial ribosomal protein bS6 family.

Its function is as follows. Binds together with bS18 to 16S ribosomal RNA. In Synechococcus sp. (strain CC9311), this protein is Small ribosomal subunit protein bS6.